The sequence spans 107 residues: UPF0060 membrane protein A1S_1909 (107 aa).

4 helical membrane-spanning segments follow: residues 2–22 (FGLF…PYLI), 28–48 (SAWL…LLTL), 56–76 (IYAA…RFVD), and 85–105 (ILGG…PQGL).

Belongs to the UPF0060 family.

The protein localises to the cell inner membrane. This is UPF0060 membrane protein A1S_1909 from Acinetobacter baumannii (strain ATCC 17978 / DSM 105126 / CIP 53.77 / LMG 1025 / NCDC KC755 / 5377).